The following is a 294-amino-acid chain: UDP-3-O-acyl-N-acetylglucosamine deacetylase (294 aa).

The Zn(2+) site is built by H75, H232, and D236. Catalysis depends on H259, which acts as the Proton donor.

This sequence belongs to the LpxC family. It depends on Zn(2+) as a cofactor.

It carries out the reaction a UDP-3-O-[(3R)-3-hydroxyacyl]-N-acetyl-alpha-D-glucosamine + H2O = a UDP-3-O-[(3R)-3-hydroxyacyl]-alpha-D-glucosamine + acetate. The protein operates within glycolipid biosynthesis; lipid IV(A) biosynthesis; lipid IV(A) from (3R)-3-hydroxytetradecanoyl-[acyl-carrier-protein] and UDP-N-acetyl-alpha-D-glucosamine: step 2/6. Its function is as follows. Catalyzes the hydrolysis of UDP-3-O-myristoyl-N-acetylglucosamine to form UDP-3-O-myristoylglucosamine and acetate, the committed step in lipid A biosynthesis. The polypeptide is UDP-3-O-acyl-N-acetylglucosamine deacetylase (Campylobacter jejuni subsp. doylei (strain ATCC BAA-1458 / RM4099 / 269.97)).